The chain runs to 33 residues: Cecropin-C (33 aa).

Position 21 is a 5-hydroxylysine (K21).

As to quaternary structure, monomer. Hemolymph.

The protein localises to the secreted. Cecropins have lytic and antibacterial activity against several Gram-positive and Gram-negative bacteria. Also has activity against fungi. The chain is Cecropin-C from Heliothis virescens (Tobacco budworm moth).